A 276-amino-acid chain; its full sequence is Insulin-induced gene 1 protein (276 aa).

2 disordered regions span residues 1-26 and 49-73; these read MPRL…PRAS and AAHG…QGSS. Residues 1 to 83 lie on the Cytoplasmic side of the membrane; sequence MPRLDDHLWR…SHVNSWHHHL (83 aa). The segment covering 16–25 has biased composition (basic residues); sequence GTKHRSHPRA. A helical transmembrane segment spans residues 84–106; the sequence is VQRSLVLFSVGVVLALVLNLLQV. The Extracellular segment spans residues 107–125; sequence QRNVTLFPDEVIATIFSSA. The helical transmembrane segment at 126 to 143 threads the bilayer; it reads WWVPPCCGTAAAVVGLLY. Residues 144 to 158 are Cytoplasmic-facing; it reads PCIDSHLGEPHKFKR. Glycyl lysine isopeptide (Lys-Gly) (interchain with G-Cter in ubiquitin) cross-links involve residues Lys155 and Lys157. Residues 159–181 form a helical membrane-spanning segment; that stretch reads EWASVMRCVAVFVGINHASAKLD. Residues 182–184 are Extracellular-facing; the sequence is FAN. A helical transmembrane segment spans residues 185–203; that stretch reads NVQLSLTLAALSLGLWWTF. Residues 204–208 are Cytoplasmic-facing; it reads DRSRS. Ser206 carries the phosphoserine modification. The chain crosses the membrane as a helical span at residues 209–230; sequence GLGLGITIAFLATLITQLLVYN. Topologically, residues 231–244 are extracellular; it reads GVYQYTSPDFLYIR. A helical transmembrane segment spans residues 245–262; the sequence is SWLPCIFFSGGVTVGNIG. Topologically, residues 263 to 276 are cytoplasmic; the sequence is RQLAMGVPEKPHSD. The KxHxx signature appears at 270-276; that stretch reads PEKPHSD.

It belongs to the INSIG family. In terms of assembly, interacts with SCAP; interaction is direct and only takes place in the presence of sterols; it prevents interaction between SCAP and the coat protein complex II (COPII). Associates with the SCAP-SREBP complex (composed of SCAP and SREBF1/SREBP1 or SREBF2/SREBP2); association is mediated via its interaction with SCAP and only takes place in the presence of sterols. Interaction with SCAP is mutually exclusive with PAQR3. Interacts with HMGCR (via its SSD); the interaction, accelerated by sterols, leads to the recruitment of HMGCR to AMFR/gp78 for its ubiquitination by the sterol-mediated ERAD pathway. Interacts with AMFR/gp78 (via its membrane domain); the interaction recruits HMCR at the ER membrane for its ubiquitination and degradation by the sterol-mediated ERAD pathway. Interacts with SOAT2/ACAT2; leading to promote recruitment of AMFR/gp78 and subsequent ubiquitination of SOAT2/ACAT2. Interacts with RNF139. Interacts with RNF145. Post-translationally, phosphorylation at Ser-206 by PCK1 reduces binding to oxysterol, disrupting the interaction between INSIG1 and SCAP, thereby promoting nuclear translocation of SREBP proteins (SREBF1/SREBP1 or SREBF2/SREBP2) and subsequent transcription of downstream lipogenesis-related genes. In terms of processing, ubiquitinated by AMFR/gp78 in response to sterol deprivation, leading to its degradation: when the SCAP-SREBP complex becomes dissociated from INSIG1, INSIG1 is then ubiquitinated and degraded in proteasomes. Although ubiquitination is required for rapid INSIG1 degradation, it is not required for release of the SCAP-SREBP complex. Ubiquitinated by RNF139.

The protein resides in the endoplasmic reticulum membrane. Its function is as follows. Oxysterol-binding protein that mediates feedback control of cholesterol synthesis by controlling both endoplasmic reticulum to Golgi transport of SCAP and degradation of HMGCR. Acts as a negative regulator of cholesterol biosynthesis by mediating the retention of the SCAP-SREBP complex in the endoplasmic reticulum, thereby blocking the processing of sterol regulatory element-binding proteins (SREBPs) SREBF1/SREBP1 and SREBF2/SREBP2. Binds oxysterol, including 25-hydroxycholesterol, regulating interaction with SCAP and retention of the SCAP-SREBP complex in the endoplasmic reticulum. In presence of oxysterol, interacts with SCAP, retaining the SCAP-SREBP complex in the endoplasmic reticulum, thereby preventing SCAP from escorting SREBF1/SREBP1 and SREBF2/SREBP2 to the Golgi. Sterol deprivation or phosphorylation by PCK1 reduce oxysterol-binding, disrupting the interaction between INSIG1 and SCAP, thereby promoting Golgi transport of the SCAP-SREBP complex, followed by processing and nuclear translocation of SREBF1/SREBP1 and SREBF2/SREBP2. Also regulates cholesterol synthesis by regulating degradation of HMGCR: initiates the sterol-mediated ubiquitin-mediated endoplasmic reticulum-associated degradation (ERAD) of HMGCR via recruitment of the reductase to the ubiquitin ligases AMFR/gp78 and/or RNF139. Also regulates degradation of SOAT2/ACAT2 when the lipid levels are low: initiates the ubiquitin-mediated degradation of SOAT2/ACAT2 via recruitment of the ubiquitin ligases AMFR/gp78. The protein is Insulin-induced gene 1 protein of Bos taurus (Bovine).